A 515-amino-acid polypeptide reads, in one-letter code: Protein translocase subunit SecD (515 aa).

Residues 6–26 (LYSLIFIIILTAFAVWVDLPG) traverse the membrane as a helical segment. A disordered region spans residues 141–186 (AITNGNQNQNSTKNGTPTPGTTPTPESTPQANQTPVAANVTPTPED). The span at 150–169 (NSTKNGTPTPGTTPTPESTP) shows a compositional bias: low complexity. Positions 170-186 (QANQTPVAANVTPTPED) are enriched in polar residues. 5 consecutive transmembrane segments (helical) span residues 322-342 (RSIR…ILYY), 344-364 (LPGF…FALF), 367-387 (IPVT…GMAV), 427-447 (ISTL…GASV), and 450-470 (GFAI…IFVT).

The protein belongs to the SecD/SecF family. SecD subfamily. As to quaternary structure, forms a complex with SecF. Part of the essential Sec protein translocation apparatus which comprises SecA, SecYEG and auxiliary proteins SecDF. Other proteins may also be involved.

Its subcellular location is the cell membrane. Part of the Sec protein translocase complex. Interacts with the SecYEG preprotein conducting channel. SecDF uses the proton motive force (PMF) to complete protein translocation after the ATP-dependent function of SecA. The protein is Protein translocase subunit SecD of Thermobaculum terrenum (strain ATCC BAA-798 / CCMEE 7001 / YNP1).